The chain runs to 612 residues: MKHFRTERVRATPKLFTYVLVGFIALLGLTCLYYGSSFAPGSRKSDEFDGSNNRVRTGIGSLRNRDIVLAVSRFEVPKSVPICDSRHSELIPCLDRNLHYQLKLKLNLSLMEHYEHHCPPSERRFNCLVPPPVGYKIPLRWPVSRDEVWKANIPHTHLAQEKSDQNWMVVNGDKINFPGGGTHFHNGADKYIVSLAQMLKFPGDKLNNGGSIRNVLDVGCGVASFGAYLLSHDIIAMSLAPNDVHQNQIQFALERGIPSTLGVLGTKRLPYPSRSFELAHCSRCRIDWLQRDGILLLELDRLLRPGGYFVYSSPEAYAHDPENRKIGNAMHDLFKRMCWKVVAKRDQSVIWGKPISNSCYLKRDPGVLPPLCPSGDDPDATWNVSMKACISPYSVRMHKERWSGLVPWPRRLTAPPPRLEEIGVTPEQFREDTETWRLRVIEYWKLLKPMVQKNSIRNVMDMSSNLGGFAAALNDKDVWVMNVMPVQSSPRMKIIYDRGLIGATHDWCEAFDTYPRTFDLIHAWNTFTETQARGCSFEDLLIEMDRILRPEGFVIIRDTTDNISYIKKYLTLLKWDKWSTETTPKGDPLSTKDEIVLIARKKLWSLPAISVS.

At 1 to 14 (MKHFRTERVRATPK) the chain is on the cytoplasmic side. Residues 15 to 35 (LFTYVLVGFIALLGLTCLYYG) form a helical; Signal-anchor for type II membrane protein membrane-spanning segment. Topologically, residues 36-612 (SSFAPGSRKS…LWSLPAISVS (577 aa)) are lumenal. N107, N383, and N562 each carry an N-linked (GlcNAc...) asparagine glycan.

It belongs to the methyltransferase superfamily.

The protein resides in the golgi apparatus membrane. This chain is Probable methyltransferase PMT9, found in Arabidopsis thaliana (Mouse-ear cress).